Consider the following 265-residue polypeptide: ClpXP adapter protein SpxH (265 aa).

This sequence belongs to the SpxH family. As to quaternary structure, interacts with Spx.

It localises to the cytoplasm. Adapter protein required for efficient degradation of Spx by ClpXP under non-stress conditions. Interaction with Spx stabilizes Spx and exposes the C-terminus of Spx for recognition and proteolysis by ClpXP. The sequence is that of ClpXP adapter protein SpxH from Staphylococcus haemolyticus (strain JCSC1435).